The primary structure comprises 394 residues: Cell adhesion molecule 3 (394 aa).

Residues M1–A17 form the signal peptide. Residues A18–H326 lie on the Extracellular side of the membrane. The 99-residue stretch at P22–T120 folds into the Ig-like V-type domain. 2 disulfide bridges follow: C45-C105 and C147-C204. 2 consecutive Ig-like C2-type domains span residues P128–Q223 and P228–T306. Residues S217–R240 form a disordered region. Positions A230 to R240 are enriched in basic and acidic residues. Cysteines 249 and 295 form a disulfide. Residues A327 to L347 form a helical membrane-spanning segment. Topologically, residues G348 to I394 are cytoplasmic. Positions A363 to I394 are disordered.

This sequence belongs to the nectin family.

It is found in the cell membrane. Its subcellular location is the cell junction. Functionally, may be involved in cell-cell adhesion. This is Cell adhesion molecule 3 (cadm3) from Xenopus laevis (African clawed frog).